Reading from the N-terminus, the 154-residue chain is Histidine-containing phosphotransfer protein 1 (154 aa).

The residue at position 1 (methionine 1) is an N-acetylmethionine. Residues 38-143 (NPDFVSQVVT…FKLEQQIVAS (106 aa)) form the HPt domain. Position 79 is a phosphohistidine (histidine 79).

As to quaternary structure, interacts with the B-type response regulators ARR1, ARR2, ARR4 and ARR9. Binds to ETR1, AHK2, AHK3, AHK4, AHK5 and FBR12. Post-translationally, two-component system major event consists of a His-to-Asp phosphorelay between a sensor histidine kinase (HK) and a response regulator (RR). In plants, the His-to-Asp phosphorelay involves an additional intermediate named Histidine-containing phosphotransfer protein (HPt). This multistep phosphorelay consists of a His-Asp-His-Asp sequential transfer of a phosphate group between first a His and an Asp of the HK protein, followed by the transfer to a conserved His of the HPt protein and finally the transfer to an Asp in the receiver domain of the RR protein. As to expression, strongly expressed in roots.

It is found in the cytoplasm. It localises to the cytosol. Its subcellular location is the nucleus. Its function is as follows. Functions as a two-component phosphorelay mediators between cytokinin sensor histidine kinases and response regulator (B-type ARRs). Plays an important role in propagating cytokinin signal transduction through the multistep His-to-Asp phosphorelay. In Arabidopsis thaliana (Mouse-ear cress), this protein is Histidine-containing phosphotransfer protein 1 (AHP1).